A 393-amino-acid chain; its full sequence is Pigment production hydroxylase (393 aa).

Functionally, involved in pigment production acting as a hydroxylase that transforms indole to indoxyl, resulting in the formation of indigo. This chain is Pigment production hydroxylase, found in Rhodococcus erythropolis (Arthrobacter picolinophilus).